The sequence spans 199 residues: Thymidine kinase (199 aa).

ATP is bound by residues 15–22 (GSMFSGKS) and 88–91 (DEVQ). The active-site Proton acceptor is the glutamate 89. Cysteine 145, cysteine 148, cysteine 183, and histidine 186 together coordinate Zn(2+).

This sequence belongs to the thymidine kinase family. As to quaternary structure, homotetramer.

The protein resides in the cytoplasm. It carries out the reaction thymidine + ATP = dTMP + ADP + H(+). This is Thymidine kinase from Staphylococcus epidermidis (strain ATCC 12228 / FDA PCI 1200).